A 171-amino-acid chain; its full sequence is Neudesin (171 aa).

Positions 1 to 30 (MARPAPWWRLRLLAALVLALALVPVPSAWA) are cleaved as a signal peptide. In terms of domain architecture, Cytochrome b5 heme-binding spans 43–128 (VRLFTEEELA…KELEALDDVF (86 aa)). Lys135 is subject to N6-acetyllysine.

It belongs to the cytochrome b5 family. MAPR subfamily. In terms of assembly, interacts with PINK1 and PARK7. In the embryo, expressed most abundantly in brain and spinal cord. Widely expressed in adult tissues including brain, heart, lung and kidney. In brain, expressed in neurons but not in glial cells. In the hypothalamus is expressed primarily in the paraventricular nucleus (PVN), with lower levels of expression in the arcuate nucleus (ARC).

It is found in the secreted. The protein resides in the extracellular space. Its subcellular location is the mitochondrion. It localises to the endoplasmic reticulum. Acts as a neurotrophic factor in postnatal mature neurons, enhancing neuronal survival. Promotes cell proliferation and neurogenesis in undifferentiated neural pro-genitor cells at the embryonic stage and inhibits differentiation of astrocytes. Its neurotrophic activity is exerted via MAPK1/ERK2, MAPK3/ERK1 and AKT1/AKT pathways. Neurotrophic activity is enhanced by binding to heme. Also acts as an anorexigenic neurotrophic factor that contributes to energy balance. The protein is Neudesin of Mus musculus (Mouse).